Reading from the N-terminus, the 209-residue chain is U1 small nuclear ribonucleoprotein C (209 aa).

The Matrin-type zinc finger occupies 4 to 36 (HYCDYCDVFLTHDSASVRKAHNSGRNHLANVRD). Positions 72–87 (PQHLQAPPQGGFAPPM) are enriched in low complexity. A disordered region spans residues 72–209 (PQHLQAPPQG…RARMMGPGGR (138 aa)). 2 stretches are compositionally biased toward pro residues: residues 93-150 (GGFP…PFPP) and 159-191 (PGAP…PTNP).

This sequence belongs to the U1 small nuclear ribonucleoprotein C family. U1 snRNP is composed of the 7 core Sm proteins B/B', D1, D2, D3, E, F and G that assemble in a heptameric protein ring on the Sm site of the small nuclear RNA to form the core snRNP, and at least 3 U1 snRNP-specific proteins U1-70K, U1-A and U1-C. U1-C interacts with U1 snRNA and the 5' splice-site region of the pre-mRNA.

It is found in the nucleus. Component of the spliceosomal U1 snRNP, which is essential for recognition of the pre-mRNA 5' splice-site and the subsequent assembly of the spliceosome. U1-C is directly involved in initial 5' splice-site recognition for both constitutive and regulated alternative splicing. The interaction with the 5' splice-site seems to precede base-pairing between the pre-mRNA and the U1 snRNA. Stimulates commitment or early (E) complex formation by stabilizing the base pairing of the 5' end of the U1 snRNA and the 5' splice-site region. The polypeptide is U1 small nuclear ribonucleoprotein C (Coprinopsis cinerea (strain Okayama-7 / 130 / ATCC MYA-4618 / FGSC 9003) (Inky cap fungus)).